A 401-amino-acid polypeptide reads, in one-letter code: 2-amino-3-carboxymuconate-6-semialdehyde decarboxylase (401 aa).

Zn(2+) is bound by residues H18 and H20. Residue R59 coordinates substrate. Zn(2+) contacts are provided by H234 and D352.

It belongs to the metallo-dependent hydrolases superfamily. ACMSD family. Monomer.

The enzyme catalyses 2-amino-3-carboxymuconate 6-semialdehyde + H(+) = 2-aminomuconate 6-semialdehyde + CO2. It functions in the pathway secondary metabolite metabolism; quinolate metabolism. Converts alpha-amino-beta-carboxymuconate-epsilon-semialdehyde (ACMS) to alpha-aminomuconate semialdehyde (AMS). The polypeptide is 2-amino-3-carboxymuconate-6-semialdehyde decarboxylase (Caenorhabditis elegans).